The following is a 441-amino-acid chain: Tubulin alpha chain (441 aa).

GTP is bound by residues glutamine 11, glutamate 68, serine 137, glycine 141, threonine 142, threonine 176, asparagine 203, and asparagine 224. Glutamate 68 lines the Mg(2+) pocket. Residue glutamate 250 is part of the active site.

This sequence belongs to the tubulin family. As to quaternary structure, dimer of alpha and beta chains. A typical microtubule is a hollow water-filled tube with an outer diameter of 25 nm and an inner diameter of 15 nM. Alpha-beta heterodimers associate head-to-tail to form protofilaments running lengthwise along the microtubule wall with the beta-tubulin subunit facing the microtubule plus end conferring a structural polarity. Microtubules usually have 13 protofilaments but different protofilament numbers can be found in some organisms and specialized cells. It depends on Mg(2+) as a cofactor.

It is found in the cytoplasm. It localises to the cytoskeleton. The catalysed reaction is GTP + H2O = GDP + phosphate + H(+). Functionally, tubulin is the major constituent of microtubules, a cylinder consisting of laterally associated linear protofilaments composed of alpha- and beta-tubulin heterodimers. Microtubules grow by the addition of GTP-tubulin dimers to the microtubule end, where a stabilizing cap forms. Below the cap, tubulin dimers are in GDP-bound state, owing to GTPase activity of alpha-tubulin. The polypeptide is Tubulin alpha chain (TUB1) (Encephalitozoon cuniculi (strain GB-M1) (Microsporidian parasite)).